Reading from the N-terminus, the 1679-residue chain is GRIP and coiled-coil domain-containing protein 2 (1679 aa).

Position 1 is an N-acetylmethionine (methionine 1). 2 disordered regions span residues 1 to 23 (MEDS…KLET) and 1466 to 1522 (LKSE…SAGT). The stretch at 35–1469 (KQMMLLQKAK…ETQLFQLKSE (1435 aa)) forms a coiled coil. Residues serine 1474 and serine 1478 each carry the phosphoserine modification. A compositionally biased stretch (polar residues) spans 1474–1483 (SPASSHQPSK). The tract at residues 1569 to 1608 (HLNGLLRETEATNAILMEQIKLLKSEIRRLERNQEREKSV) is mediates interaction with RAB6A. A mediates interaction with RAB9A region spans residues 1569–1679 (HLNGLLRETE…SYLHSWSGLR (111 aa)). A GRIP domain is found at 1604–1654 (REKSVANLEYLKNVLLRFIFLKPGSERERLLPVIDTMLQLSPEEKGKLATV).

As to quaternary structure, homodimer. Interacts (via GRIP domain) with RAB6A (preferentially in its GTP-bound form). May interact (RAB6A-dependent) with ARL1; might be involved in GCC2 Golgi localization. Interacts with CLASP1 and CLASP2; recruits both proteins to membranes of the TGN. Interacts with STX16. Interacts (probably via GRIP domain) with RAB9A (preferentially in its GTP-bound form).

Its subcellular location is the cytoplasm. The protein resides in the golgi apparatus. The protein localises to the trans-Golgi network membrane. Golgin which probably tethers transport vesicles to the trans-Golgi network (TGN) and regulates vesicular transport between the endosomes and the Golgi. As a RAB9A effector it is involved in recycling of the mannose 6-phosphate receptor from the late endosomes to the TGN. May also play a role in transport between the recycling endosomes and the Golgi. Required for maintenance of the Golgi structure, it is involved in the biogenesis of noncentrosomal, Golgi-associated microtubules through recruitment of CLASP1 and CLASP2. The polypeptide is GRIP and coiled-coil domain-containing protein 2 (Gcc2) (Rattus norvegicus (Rat)).